The sequence spans 533 residues: Flavin-containing monooxygenase 5 (533 aa).

The residue at position 5 (Arg5) is a Dimethylated arginine. Residues 10–14 (GAGAS), Glu33, and 41–42 (LW) each bind FAD. Position 54 is a phosphoserine (Ser54). Tyr56 bears the Phosphotyrosine mark. Ser58 carries the post-translational modification Phosphoserine. FAD is bound at residue 62–63 (NT). 196 to 199 (SGGD) contacts NADP(+). Residue Ser280 is modified to Phosphoserine. Phosphothreonine is present on Thr284. Ser401 carries the post-translational modification Phosphoserine. Residues 513-533 (LVTVRVLMLAVAFFAVILAYF) traverse the membrane as a helical segment.

It belongs to the FMO family. Requires FAD as cofactor. As to expression, expressed in liver (at protein level). Expressed in the mucosal epithelium of the gastrointestinal tract.

The protein localises to the microsome membrane. Its subcellular location is the endoplasmic reticulum membrane. It carries out the reaction N,N-dimethylaniline + NADPH + O2 + H(+) = N,N-dimethylaniline N-oxide + NADP(+) + H2O. The catalysed reaction is NADPH + O2 + H(+) = H2O2 + NADP(+). The enzyme catalyses heptan-2-one + NADPH + O2 + H(+) = pentyl acetate + NADP(+) + H2O. It catalyses the reaction octan-3-one + NADPH + O2 + H(+) = pentyl propanoate + NADP(+) + H2O. It carries out the reaction octan-3-one + NADPH + O2 + H(+) = ethyl hexanoate + NADP(+) + H2O. The catalysed reaction is hexan-3-one + NADPH + O2 + H(+) = ethyl butanoate + NADP(+) + H2O. The enzyme catalyses hexan-3-one + NADPH + O2 + H(+) = propyl propanoate + NADP(+) + H2O. It catalyses the reaction heptan-4-one + NADPH + O2 + H(+) = propyl butanoate + NADP(+) + H2O. It carries out the reaction (2E)-geranial + NADPH + O2 + H(+) = (1E)-2,6-dimethylhepta-1,5-dien-1-yl formate + NADP(+) + H2O. The catalysed reaction is sulcatone + NADPH + O2 + H(+) = 4-methylpent-3-en-1-yl acetate + NADP(+) + H2O. Acts as a Baeyer-Villiger monooxygenase on a broad range of substrates. Catalyzes the insertion of an oxygen atom into a carbon-carbon bond adjacent to a carbonyl, which converts ketones to esters. Active on diverse carbonyl compounds, whereas soft nucleophiles are mostly non- or poorly reactive. In contrast with other forms of FMO it is non- or poorly active on 'classical' substrates such as drugs, pesticides, and dietary components containing soft nucleophilic heteroatoms. Able to oxidize drug molecules bearing a carbonyl group on an aliphatic chain, such as nabumetone and pentoxifylline. Also, in the absence of substrates, shows slow but yet significant NADPH oxidase activity. Acts as a positive modulator of cholesterol biosynthesis as well as glucose homeostasis, promoting metabolic aging via pleiotropic effects. The polypeptide is Flavin-containing monooxygenase 5 (Mus musculus (Mouse)).